The following is a 380-amino-acid chain: Chromo domain-containing protein 2 (380 aa).

2 disordered regions span residues 14–58 (ISES…SLYG) and 100–156 (KLSP…VPLN). The segment covering 33–52 (NSINNKSSTASLESPQNGSW) has biased composition (polar residues). Positions 108–119 (EDSEDKKEEDES) are enriched in acidic residues. Over residues 121-140 (SYKNEFKSSSSASVSSNFEK) the composition is skewed to low complexity. In terms of domain architecture, Chromo spans 176-238 (FAVEMILDSR…SRGGKPDLSS (63 aa)). The tract at residues 250-273 (SNEASYVEKDESSNSDDSISYKRR) is disordered.

Its subcellular location is the nucleus. In terms of biological role, component of the kinetochore which plays a role in stabilizing microtubules and so allowing accurate chromosome segregation. The chain is Chromo domain-containing protein 2 (chp2) from Schizosaccharomyces pombe (strain 972 / ATCC 24843) (Fission yeast).